Reading from the N-terminus, the 356-residue chain is Tyrosine recombinase XerS (356 aa).

Residues 16–121 (IMPWYVLEYY…ALSSLYKYLT (106 aa)) enclose the Core-binding (CB) domain. The region spanning 169 to 354 (GFLTYIDQEY…VNDEQKNALD (186 aa)) is the Tyr recombinase domain. Residues R210, K234, H306, R309, and H332 contribute to the active site. Y341 serves as the catalytic O-(3'-phospho-DNA)-tyrosine intermediate.

It belongs to the 'phage' integrase family. XerS subfamily.

The protein resides in the cytoplasm. FtsK is required for recombination. In terms of biological role, site-specific tyrosine recombinase, which acts by catalyzing the cutting and rejoining of the recombining DNA molecules. Essential to convert dimers of the bacterial chromosome into monomers to permit their segregation at cell division. This chain is Tyrosine recombinase XerS, found in Streptococcus pneumoniae (strain Hungary19A-6).